A 130-amino-acid chain; its full sequence is Small ribosomal subunit protein uS8 (130 aa).

This sequence belongs to the universal ribosomal protein uS8 family. In terms of assembly, part of the 30S ribosomal subunit. Contacts proteins S5 and S12.

Functionally, one of the primary rRNA binding proteins, it binds directly to 16S rRNA central domain where it helps coordinate assembly of the platform of the 30S subunit. The chain is Small ribosomal subunit protein uS8 from Pseudomonas fluorescens (strain ATCC BAA-477 / NRRL B-23932 / Pf-5).